The primary structure comprises 546 residues: CTP synthase (546 aa).

The amidoligase domain stretch occupies residues 1–267 (MSKFVFVTGG…AQQTLELLNL (267 aa)). CTP is bound at residue Ser-13. Ser-13 contacts UTP. ATP-binding positions include 14-19 (SIGKGI) and Asp-71. Mg(2+) is bound by residues Asp-71 and Glu-141. Residues 148–150 (DIE), 188–193 (KTKPTQ), and Lys-224 each bind CTP. Residues 188-193 (KTKPTQ) and Lys-224 each bind UTP. The region spanning 292-534 (EIAIVGKYVQ…MKAALKGREE (243 aa)) is the Glutamine amidotransferase type-1 domain. Gly-354 contacts L-glutamine. The Nucleophile; for glutamine hydrolysis role is filled by Cys-381. L-glutamine contacts are provided by residues 382 to 385 (LGMQ), Glu-405, and Arg-462. Residues His-507 and Glu-509 contribute to the active site.

This sequence belongs to the CTP synthase family. Homotetramer.

It carries out the reaction UTP + L-glutamine + ATP + H2O = CTP + L-glutamate + ADP + phosphate + 2 H(+). The enzyme catalyses L-glutamine + H2O = L-glutamate + NH4(+). The catalysed reaction is UTP + NH4(+) + ATP = CTP + ADP + phosphate + 2 H(+). It functions in the pathway pyrimidine metabolism; CTP biosynthesis via de novo pathway; CTP from UDP: step 2/2. With respect to regulation, allosterically activated by GTP, when glutamine is the substrate; GTP has no effect on the reaction when ammonia is the substrate. The allosteric effector GTP functions by stabilizing the protein conformation that binds the tetrahedral intermediate(s) formed during glutamine hydrolysis. Inhibited by the product CTP, via allosteric rather than competitive inhibition. Functionally, catalyzes the ATP-dependent amination of UTP to CTP with either L-glutamine or ammonia as the source of nitrogen. Regulates intracellular CTP levels through interactions with the four ribonucleotide triphosphates. In Microcystis aeruginosa (strain NIES-843 / IAM M-2473), this protein is CTP synthase.